The sequence spans 115 residues: Nucleoid-associated protein Ava_2322 (115 aa).

The protein belongs to the YbaB/EbfC family. Homodimer.

Its subcellular location is the cytoplasm. It localises to the nucleoid. Functionally, binds to DNA and alters its conformation. May be involved in regulation of gene expression, nucleoid organization and DNA protection. The polypeptide is Nucleoid-associated protein Ava_2322 (Trichormus variabilis (strain ATCC 29413 / PCC 7937) (Anabaena variabilis)).